A 283-amino-acid chain; its full sequence is Bifunctional protein FolD (283 aa).

NADP(+) is bound by residues Gly165–Ser167 and Ser190.

Belongs to the tetrahydrofolate dehydrogenase/cyclohydrolase family. In terms of assembly, homodimer.

It catalyses the reaction (6R)-5,10-methylene-5,6,7,8-tetrahydrofolate + NADP(+) = (6R)-5,10-methenyltetrahydrofolate + NADPH. The enzyme catalyses (6R)-5,10-methenyltetrahydrofolate + H2O = (6R)-10-formyltetrahydrofolate + H(+). It functions in the pathway one-carbon metabolism; tetrahydrofolate interconversion. Its function is as follows. Catalyzes the oxidation of 5,10-methylenetetrahydrofolate to 5,10-methenyltetrahydrofolate and then the hydrolysis of 5,10-methenyltetrahydrofolate to 10-formyltetrahydrofolate. This chain is Bifunctional protein FolD, found in Cupriavidus necator (strain ATCC 17699 / DSM 428 / KCTC 22496 / NCIMB 10442 / H16 / Stanier 337) (Ralstonia eutropha).